The primary structure comprises 96 residues: Large ribosomal subunit protein bL25 (96 aa).

The protein belongs to the bacterial ribosomal protein bL25 family. Part of the 50S ribosomal subunit; part of the 5S rRNA/L5/L18/L25 subcomplex. Contacts the 5S rRNA. Binds to the 5S rRNA independently of L5 and L18.

Functionally, this is one of the proteins that binds to the 5S RNA in the ribosome where it forms part of the central protuberance. In Francisella philomiragia subsp. philomiragia (strain ATCC 25017 / CCUG 19701 / FSC 153 / O#319-036), this protein is Large ribosomal subunit protein bL25.